A 376-amino-acid polypeptide reads, in one-letter code: Phospho-N-acetylmuramoyl-pentapeptide-transferase (376 aa).

Helical transmembrane passes span 28–48 (RTIM…PWFI), 76–96 (TMGG…WADL), 100–120 (FVLA…LDDF), 135–155 (YKLI…FLLA), 179–199 (YPIE…VVAT), 211–231 (GLAI…AYIV), 252–272 (AGEL…FLWY), 279–299 (VFMG…LAVF), 307–327 (IILG…VLSF), and 353–373 (KIIV…LASM).

Belongs to the glycosyltransferase 4 family. MraY subfamily. Requires Mg(2+) as cofactor.

The protein localises to the cell inner membrane. It carries out the reaction UDP-N-acetyl-alpha-D-muramoyl-L-alanyl-gamma-D-glutamyl-meso-2,6-diaminopimeloyl-D-alanyl-D-alanine + di-trans,octa-cis-undecaprenyl phosphate = di-trans,octa-cis-undecaprenyl diphospho-N-acetyl-alpha-D-muramoyl-L-alanyl-D-glutamyl-meso-2,6-diaminopimeloyl-D-alanyl-D-alanine + UMP. Its pathway is cell wall biogenesis; peptidoglycan biosynthesis. Catalyzes the initial step of the lipid cycle reactions in the biosynthesis of the cell wall peptidoglycan: transfers peptidoglycan precursor phospho-MurNAc-pentapeptide from UDP-MurNAc-pentapeptide onto the lipid carrier undecaprenyl phosphate, yielding undecaprenyl-pyrophosphoryl-MurNAc-pentapeptide, known as lipid I. The polypeptide is Phospho-N-acetylmuramoyl-pentapeptide-transferase (Sorangium cellulosum (strain So ce56) (Polyangium cellulosum (strain So ce56))).